The sequence spans 224 residues: MILKALPNESMPREKLLQRGPQALTDAELLAIFLRTGTQGMNVIELADFLIQDFGSLRQLFSASEQEFCQHKGLGQAKYVQLQAVLEMTQRYLAETLKRGDALTSPEQTKLYLSSILRDRQREAFYILFLDNQHRVIKDEILFEGTLDAASVYPREVVKRALHHNAAALILAHNHPSGVAEPSQADRRITRRLIDALALVDIRILDHFVIGDGESVSFAERGWI.

Positions 102–224 (ALTSPEQTKL…SVSFAERGWI (123 aa)) constitute an MPN domain. Zn(2+) is bound by residues histidine 173, histidine 175, and aspartate 186. Residues 173–186 (HNHPSGVAEPSQAD) carry the JAMM motif motif.

The protein belongs to the UPF0758 family.

This is UPF0758 protein VP0184 from Vibrio parahaemolyticus serotype O3:K6 (strain RIMD 2210633).